A 57-amino-acid chain; its full sequence is Protein YnaL (57 aa).

The disordered stretch occupies residues 7–57; it reads LQIPVPEPIPGDPVPVPDPIPRPQPMPDPPPDEEPIKLSHRERRSARIRAC. The span at 11-35 shows a compositional bias: pro residues; it reads VPEPIPGDPVPVPDPIPRPQPMPDP. Residues 46–57 show a composition bias toward basic residues; it reads HRERRSARIRAC.

The sequence is that of Protein YnaL from Escherichia coli (strain K12).